We begin with the raw amino-acid sequence, 88 residues long: MATIPVNPKPFLNNLTGKTVIVKLKWGMEYKGFLASVDSYMNLQLGNTEEYIDGQLTGNLGEILIRCNNVLYVRGVPEDEELEDADQD.

One can recognise a Sm domain in the interval 7-79 (NPKPFLNNLT…VLYVRGVPED (73 aa)).

The protein belongs to the snRNP Sm proteins family. SmF/LSm6 subfamily.

The protein localises to the nucleus. Functionally, probable common Sm protein, is found in U1 and U2 snRNPs and may be part of the spliceosome. This is Probable small nuclear ribonucleoprotein F from Arabidopsis thaliana (Mouse-ear cress).